Reading from the N-terminus, the 877-residue chain is Kinetochore null protein 2 (877 aa).

Residues 20-107 (IRLNLWSMKF…SNGIPENWAD (88 aa)) form the SANTA domain. Disordered regions lie at residues 122-315 (RPIQ…SKSV), 338-535 (FEST…ESLN), and 549-604 (MMFG…NDSI). A coiled-coil region spans residues 153 to 211 (QKNSENEKERNRREREEQQTKERERRLEEEKQRRDAEAEAERRRKEEEELEEANYTLRA). The segment covering 156–199 (SENEKERNRREREEQQTKERERRLEEEKQRRDAEAEAERRRKEE) has biased composition (basic and acidic residues). Polar residues predominate over residues 251–279 (IASSTPQQKQRLADGANNQIPPTQKSQDS). Basic and acidic residues-rich tracts occupy residues 359–385 (EPRH…DNSR), 394–444 (RRHE…RGRD), and 453–480 (VRFE…DYGR). Positions 491-549 (EDEEKLNAIVRREKELRNRLQKSQKASSSSYRHRSNSSDAEESLNEWDIENQELLDNSM) form a coiled coil. The span at 511-520 (QKSQKASSSS) shows a compositional bias: low complexity. The span at 573 to 583 (RSKPANSTKSP) shows a compositional bias: polar residues. Over residues 592-601 (ASLEDNRDLN) the composition is skewed to basic and acidic residues. Positions 617–678 (VAKKITWRKQ…AITRLKWVEP (62 aa)) constitute a Myb-like domain. Disordered stretches follow at residues 757 to 785 (RGGT…FNSP) and 808 to 877 (MQAR…TSIY). Composition is skewed to polar residues over residues 775-785 (SRGNNSTFNSP) and 819-836 (SSSM…TSIS). Residues 856 to 871 (EDDENEDNDDDDDMRE) are compositionally biased toward acidic residues.

The protein belongs to the KNL2 family. In terms of assembly, interacts with hcp-3.

The protein resides in the nucleus. The protein localises to the chromosome. It is found in the centromere. It localises to the kinetochore. Its function is as follows. Required for the recruitment of hcp-3, hcp-4, knl-1, bub-1 and lin-53 to kinetochores, kinetochore assembly, chromosome condensation and chromosome segregation in meiosis and mitosis. This Caenorhabditis elegans protein is Kinetochore null protein 2.